The primary structure comprises 715 residues: Probable ubiquitin thioesterase DG1039 (715 aa).

A coiled-coil region spans residues 86 to 302 (KSRNEIKRKA…NNQTDDKLDN (217 aa)). A compositionally biased stretch (basic and acidic residues) spans 287–302 (NKKLENNNQTDDKLDN). Disordered stretches follow at residues 287–367 (NKKL…YNST), 398–450 (QYKQ…QQQY), and 502–527 (LAQS…SSEA). The segment covering 339–349 (TTAQLPLSITQ) has biased composition (polar residues). The segment covering 398–409 (QYKQQQQQQPIQ) has biased composition (low complexity). 2 stretches are compositionally biased toward polar residues: residues 410 to 427 (SPTN…NNYN) and 502 to 525 (LAQS…IDSS). Residues 537 to 666 (IIVHGEVFQE…IFRLTDPPGL (130 aa)) form the MPN domain. 7 residues coordinate Zn(2+): H615, H617, D628, H630, C672, H678, and H680. Residues 615 to 628 (HTHPTQDCFLSAVD) carry the JAMM motif motif.

This sequence belongs to the peptidase M67C family. It depends on Zn(2+) as a cofactor.

Its function is as follows. May be a zinc metalloprotease that specifically cleaves ubiquitin chains. The protein is Probable ubiquitin thioesterase DG1039 (DG1039) of Dictyostelium discoideum (Social amoeba).